We begin with the raw amino-acid sequence, 235 residues long: Kinetochore protein Spc25 (235 aa).

Positions lysine 44–threonine 106 form a coiled coil. Residues glutamate 193–asparagine 216 are disordered.

It belongs to the SPC25 family. Component of the Ndc80 complex, which is composed of Ndc80, Nuf2 and Spc25.

It localises to the nucleus. Its subcellular location is the chromosome. It is found in the centromere. The protein localises to the kinetochore. Acts as a component of the essential kinetochore-associated Ndc80 complex, which is required for chromosome segregation and spindle checkpoint activity during meiosis and mitosis. Required for kinetochore integrity and the organization of stable microtubule binding sites in the outer plate of the kinetochore. Participates in SAC signaling that responds specifically to disruptions in spindle microtubule dynamics. The NDC80 complex synergistically enhances the affinity of the SKA1 complex for microtubules and may allow the NDC80 complex to track depolymerizing microtubules. This chain is Kinetochore protein Spc25, found in Drosophila pseudoobscura pseudoobscura (Fruit fly).